The primary structure comprises 703 residues: MLGTLTPLSSLLLLLLVLVLGCGPRASSGGGAGGAAGYAPVKYIQPMQKGPVGPPFREGKGQYLEMPLPLLPMDLKGEPGPPGKPGPRGPPGPPGFPGKPGMGKPGLHGQPGPAGPPGFSRMGKAGPPGLPGKVGPPGQPGLRGEPGIRGDQGLRGPPGPPGLPGPSGITIPGKPGAQGVPGPPGFQGEPGPQGEPGPPGDRGLKGDNGVGQPGLPGAPGQGGAPGPPGLPGPAGLGKPGLDGLPGAPGDKGESGPPGVPGPRGEPGAVGPKGPPGVDGVGVPGAAGLPGPQGPSGAKGEPGTRGPPGLIGPTGYGMPGLPGPKGDRGPAGVPGLLGDRGEPGEDGEPGEQGPQGLGGPPGLPGSAGLPGRRGPPGPKGEAGPGGPPGVPGIRGDQGPSGLAGKPGVPGERGLPGAHGPPGPTGPKGEPGFTGRPGGPGVAGALGQKGDLGLPGQPGLRGPSGIPGLQGPAGPIGPQGLPGLKGEPGLPGPPGEGRAGEPGTAGPTGPPGVPGSPGITGPPGPPGPPGPPGAPGAFDETGIAGLHLPNGGVEGAVLGKGGKPQFGLGELSAHATPAFTAVLTSPFPASGMPVKFDRTLYNGHSGYNPATGIFTCPVGGVYYFAYHVHVKGTNVWVALYKNNVPATYTYDEYKKGYLDQASGGAVLQLRPNDQVWVQMPSDQANGLYSTEYIHSSFSGFLLCPT.

The signal sequence occupies residues 1-28 (MLGTLTPLSSLLLLLLVLVLGCGPRASS). A nonhelical region (NC2) region spans residues 29-76 (GGGAGGAAGYAPVKYIQPMQKGPVGPPFREGKGQYLEMPLPLLPMDLK). The segment at 70–544 (LLPMDLKGEP…AFDETGIAGL (475 aa)) is disordered. The tract at residues 77–536 (GEPGPPGKPG…PGPPGAPGAF (460 aa)) is triple-helical region. The segment covering 79 to 97 (PGPPGKPGPRGPPGPPGFP) has biased composition (pro residues). A compositionally biased stretch (low complexity) spans 166-192 (PSGITIPGKPGAQGVPGPPGFQGEPGP). Positions 206–224 (GDNGVGQPGLPGAPGQGGA) are enriched in gly residues. 2 stretches are compositionally biased toward low complexity: residues 265–275 (EPGAVGPKGPP) and 285–297 (AAGL…PSGA). Positions 433–442 (GRPGGPGVAG) are enriched in gly residues. 2 stretches are compositionally biased toward low complexity: residues 444-462 (LGQK…RGPS) and 476-486 (PQGLPGLKGEP). Residues 506–532 (TGPPGVPGSPGITGPPGPPGPPGPPGA) show a composition bias toward pro residues. The nonhelical region (NC1) stretch occupies residues 537–703 (DETGIAGLHL…SFSGFLLCPT (167 aa)). The C1q domain occupies 570–703 (SAHATPAFTA…SFSGFLLCPT (134 aa)).

In terms of assembly, homotrimers, or heterotrimers in association with alpha 2(VIII) type collagens. Four homotrimers can form a tetrahedron stabilized by central interacting C-terminal NC1 trimers. In terms of processing, proteolytically cleaved by neutrophil elastase, in vitro. Post-translationally, prolines at the third position of the tripeptide repeating unit (G-X-Y) are hydroxylated in some or all of the chains. Expressed primarily in the subendothelium of large blood vessels. Also expressed in arterioles and venules in muscle, heart, kidney, spleen, umbilical cord, liver and lung and is also found in connective tissue layers around hair follicles, around nerve bundles in muscle, in the dura of the optic nerve, in cornea and sclera, and in the perichondrium of cartilaginous tissues. In the kidney, expressed in mesangial cells, glomerular endothelial cells, and tubular epithelial cells. Also expressed in mast cells, and in astrocytes during the repair process. Expressed in Descemet's membrane.

The protein localises to the secreted. It is found in the extracellular space. The protein resides in the extracellular matrix. It localises to the basement membrane. Macromolecular component of the subendothelium. Major component of the Descemet's membrane (basement membrane) of corneal endothelial cells. Also a component of the endothelia of blood vessels. Necessary for migration and proliferation of vascular smooth muscle cells and thus, has a potential role in the maintenance of vessel wall integrity and structure, in particular in atherogenesis. This chain is Collagen alpha-2(VIII) chain (COL8A2), found in Homo sapiens (Human).